The primary structure comprises 266 residues: Glucosamine-6-phosphate deaminase (266 aa).

The Proton acceptor; for enolization step role is filled by Asp-72. Asp-141 (for ring-opening step) is an active-site residue. His-143 (proton acceptor; for ring-opening step) is an active-site residue. Residue Glu-148 is the For ring-opening step of the active site.

It belongs to the glucosamine/galactosamine-6-phosphate isomerase family. NagB subfamily. In terms of assembly, homohexamer.

The catalysed reaction is alpha-D-glucosamine 6-phosphate + H2O = beta-D-fructose 6-phosphate + NH4(+). Its pathway is amino-sugar metabolism; N-acetylneuraminate degradation; D-fructose 6-phosphate from N-acetylneuraminate: step 5/5. With respect to regulation, allosterically activated by N-acetylglucosamine 6-phosphate (GlcNAc6P). Functionally, catalyzes the reversible isomerization-deamination of glucosamine 6-phosphate (GlcN6P) to form fructose 6-phosphate (Fru6P) and ammonium ion. This is Glucosamine-6-phosphate deaminase from Citrobacter koseri (strain ATCC BAA-895 / CDC 4225-83 / SGSC4696).